Reading from the N-terminus, the 380-residue chain is ER-phagy receptor 1 (380 aa).

The J domain maps to 9-74 (DCYEILQVNH…DKRKWHEKDY (66 aa)). The segment at 270-294 (IMCMVCNKNFRSQNQLENHENSKKH) adopts a C2H2-type zinc-finger fold. The tract at residues 307–337 (KHAKEAQKNAESNKQPEDAPSESPYSNKVSS) is disordered. Phosphoserine is present on S344. Positions 352-355 (FTFV) match the AIM motif. Positions 361–367 (EFYTASE) match the FFAT motif.

In terms of assembly, interacts (via the AIM motif) with atg8. Interacts (via the FFAT motif) with the vesicle-associated membrane protein-associated protein (VAP) family proteins scs2 and scs22.

The protein localises to the endoplasmic reticulum. The protein resides in the preautophagosomal structure. Its function is as follows. Reticulophagy receptor required for autophagosomal sequestration of endoplasmic reticulum (ER) membranes during ER stress. Confers resistance to ER stress by promoting the autophagic degradation of the ER (ER-phagy or reticulophagy). Acts as a bridging molecule to mediate the association between atg8 on the autophagic membrane and the vesicle-associated membrane protein-associated proteins (VAPs) scs2 and scs22 on the ER. May play a role in meiosis. This Schizosaccharomyces pombe (strain 972 / ATCC 24843) (Fission yeast) protein is ER-phagy receptor 1.